Reading from the N-terminus, the 157-residue chain is Transcription elongation factor GreA (157 aa).

The stretch at 12-74 (LKKLEEELEY…TLEAMLKNAK (63 aa)) forms a coiled coil.

This sequence belongs to the GreA/GreB family.

In terms of biological role, necessary for efficient RNA polymerase transcription elongation past template-encoded arresting sites. The arresting sites in DNA have the property of trapping a certain fraction of elongating RNA polymerases that pass through, resulting in locked ternary complexes. Cleavage of the nascent transcript by cleavage factors such as GreA or GreB allows the resumption of elongation from the new 3'terminus. GreA releases sequences of 2 to 3 nucleotides. This Caldanaerobacter subterraneus subsp. tengcongensis (strain DSM 15242 / JCM 11007 / NBRC 100824 / MB4) (Thermoanaerobacter tengcongensis) protein is Transcription elongation factor GreA.